Reading from the N-terminus, the 128-residue chain is Ribonuclease P protein component 4 (128 aa).

Zn(2+)-binding residues include C67, C70, C96, and C99.

The protein belongs to the eukaryotic/archaeal RNase P protein component 4 family. As to quaternary structure, consists of a catalytic RNA component and at least 4-5 protein subunits. Zn(2+) serves as cofactor.

Its subcellular location is the cytoplasm. It catalyses the reaction Endonucleolytic cleavage of RNA, removing 5'-extranucleotides from tRNA precursor.. In terms of biological role, part of ribonuclease P, a protein complex that generates mature tRNA molecules by cleaving their 5'-ends. The polypeptide is Ribonuclease P protein component 4 (Methanopyrus kandleri (strain AV19 / DSM 6324 / JCM 9639 / NBRC 100938)).